A 122-amino-acid chain; its full sequence is UPF0344 protein BPUM_1008 (122 aa).

The next 4 helical transmembrane spans lie at 5–25, 33–53, 60–80, and 93–113; these read LHITAWVLGIILFFVAFALAG, IVHMIVRLLYLIIIATGVELY, IPGFGGEYIGKMILGILVIGF, and SVTGVLIGFIIFAIVTILLGL.

Belongs to the UPF0344 family.

The protein resides in the cell membrane. The polypeptide is UPF0344 protein BPUM_1008 (Bacillus pumilus (strain SAFR-032)).